Here is a 145-residue protein sequence, read N- to C-terminus: Extracellular globin-2 (145 aa).

The 143-residue stretch at 3-145 folds into the Globin domain; sequence QCGVLEGLKV…HIEDGIKGHH (143 aa). Cysteine 4 and cysteine 133 are oxidised to a cystine. Histidine 96 contributes to the heme b binding site.

Belongs to the globin family. As to quaternary structure, the extracellular hemoglobin of the earthworm consists of 12 subunits that have a hexagonal bilayer structure with a molecular weight near 3.8 million. Each one-twelfth subunit is composed primarily of disulfide linked trimers (chains A, B, and C) and monomers (chain D).

The polypeptide is Extracellular globin-2 (Lumbricus terrestris (Common earthworm)).